Here is a 264-residue protein sequence, read N- to C-terminus: Probable metallo-hydrolase YflN (264 aa).

Zn(2+) contacts are provided by histidine 80, histidine 82, aspartate 84, histidine 85, histidine 169, aspartate 188, and histidine 241.

It belongs to the metallo-beta-lactamase superfamily. The cofactor is Zn(2+).

In Bacillus subtilis (strain 168), this protein is Probable metallo-hydrolase YflN (yflN).